The following is a 489-amino-acid chain: uncharacterized protein (489 aa).

Disordered stretches follow at residues 1–94, 109–229, 300–389, and 428–461; these read MIEE…GSLD, NRNQ…SDDD, DDNI…TSIQ, and SESG…TLVK. Composition is skewed to low complexity over residues 43 to 53 and 64 to 77; these read LLVQQSNQSVK and SNGF…NIHD. The segment covering 121-138 has biased composition (acidic residues); the sequence is NFSEDDEDDDAEDDDSSD. A compositionally biased stretch (basic residues) spans 144 to 154; that stretch reads KKNKPKKPSKL. Residues 155-164 show a composition bias toward basic and acidic residues; that stretch reads MKHDSVDGKN. Residues 173 to 199 are compositionally biased toward basic residues; it reads SKKKVQHQLKEKNKKKGIKNDKKKSKP. A compositionally biased stretch (acidic residues) spans 308–343; the sequence is NDNDNDNDDDNDNDNDNDNDNDNDNDDDENGEDNGE. Composition is skewed to low complexity over residues 344–389 and 433–449; these read DLNI…TSIQ and SISS…SSKS.

This is an uncharacterized protein from Dictyostelium discoideum (Social amoeba).